Consider the following 268-residue polypeptide: Nickel import ATP-binding protein NikE (268 aa).

The ABC transporter domain maps to 4-252; the sequence is LNVCGLSHHY…SSDAGRVLQN (249 aa). 45–52 lines the ATP pocket; that stretch reads GRSGCGKS.

The protein belongs to the ABC transporter superfamily. Nickel importer (TC 3.A.1.5.3) family. As to quaternary structure, the complex is composed of two ATP-binding proteins (NikD and NikE), two transmembrane proteins (NikB and NikC) and a solute-binding protein (NikA).

The protein resides in the cell inner membrane. It catalyses the reaction Ni(2+)(out) + ATP + H2O = Ni(2+)(in) + ADP + phosphate + H(+). Functionally, part of the ABC transporter complex NikABCDE involved in nickel import. Responsible for energy coupling to the transport system. The sequence is that of Nickel import ATP-binding protein NikE from Shigella flexneri serotype 5b (strain 8401).